The primary structure comprises 340 residues: Ketol-acid reductoisomerase (NADP(+)) (340 aa).

Residues 3 to 183 form the KARI N-terminal Rossmann domain; that stretch reads VNIYYDKDCD…GGGRTGIIET (181 aa). Residues 26 to 29, serine 54, and 84 to 87 contribute to the NADP(+) site; these read FGSQ and DELQ. Residue histidine 109 is part of the active site. Residue glycine 135 participates in NADP(+) binding. The region spanning 184-329 is the KARI C-terminal knotted domain; the sequence is TFKDETETDL…KKLRAMMPWI (146 aa). Aspartate 192, glutamate 196, glutamate 228, and glutamate 232 together coordinate Mg(2+). Serine 253 contributes to the substrate binding site.

Belongs to the ketol-acid reductoisomerase family. Requires Mg(2+) as cofactor.

The enzyme catalyses (2R)-2,3-dihydroxy-3-methylbutanoate + NADP(+) = (2S)-2-acetolactate + NADPH + H(+). It carries out the reaction (2R,3R)-2,3-dihydroxy-3-methylpentanoate + NADP(+) = (S)-2-ethyl-2-hydroxy-3-oxobutanoate + NADPH + H(+). The protein operates within amino-acid biosynthesis; L-isoleucine biosynthesis; L-isoleucine from 2-oxobutanoate: step 2/4. Its pathway is amino-acid biosynthesis; L-valine biosynthesis; L-valine from pyruvate: step 2/4. Its function is as follows. Involved in the biosynthesis of branched-chain amino acids (BCAA). Catalyzes an alkyl-migration followed by a ketol-acid reduction of (S)-2-acetolactate (S2AL) to yield (R)-2,3-dihydroxy-isovalerate. In the isomerase reaction, S2AL is rearranged via a Mg-dependent methyl migration to produce 3-hydroxy-3-methyl-2-ketobutyrate (HMKB). In the reductase reaction, this 2-ketoacid undergoes a metal-dependent reduction by NADPH to yield (R)-2,3-dihydroxy-isovalerate. The polypeptide is Ketol-acid reductoisomerase (NADP(+)) (Campylobacter curvus (strain 525.92)).